Consider the following 497-residue polypeptide: uncharacterized protein (497 aa).

266–273 serves as a coordination point for ATP; it reads GIQGTGKS.

The protein belongs to the AAA ATPase family. Highly divergent.

It localises to the plastid. Its subcellular location is the chloroplast. This is an uncharacterized protein from Trieres chinensis (Marine centric diatom).